We begin with the raw amino-acid sequence, 250 residues long: Cell division protein ZapD (250 aa).

It belongs to the ZapD family. In terms of assembly, interacts with FtsZ.

The protein localises to the cytoplasm. In terms of biological role, cell division factor that enhances FtsZ-ring assembly. Directly interacts with FtsZ and promotes bundling of FtsZ protofilaments, with a reduction in FtsZ GTPase activity. This chain is Cell division protein ZapD, found in Yersinia pseudotuberculosis serotype O:1b (strain IP 31758).